A 383-amino-acid chain; its full sequence is Protein phosphatase 2C homolog 4 (383 aa).

The PPM-type phosphatase domain maps to 51 to 356; the sequence is SLGLCTARGD…DDITCLVVRL (306 aa). Mn(2+)-binding residues include D92, D308, and D347.

Belongs to the PP2C family. Monomer. Mg(2+) serves as cofactor. The cofactor is Mn(2+).

The protein localises to the vacuole membrane. It catalyses the reaction O-phospho-L-seryl-[protein] + H2O = L-seryl-[protein] + phosphate. It carries out the reaction O-phospho-L-threonyl-[protein] + H2O = L-threonyl-[protein] + phosphate. Its function is as follows. Has a role in the regulation of vacuole fusion. This Schizosaccharomyces pombe (strain 972 / ATCC 24843) (Fission yeast) protein is Protein phosphatase 2C homolog 4 (ptc4).